Reading from the N-terminus, the 128-residue chain is 3-aminoacrylate deaminase RutC (128 aa).

This sequence belongs to the RutC family.

The catalysed reaction is (Z)-3-aminoacrylate + H2O + H(+) = 3-oxopropanoate + NH4(+). Functionally, involved in pyrimidine catabolism. Catalyzes the deamination of 3-aminoacrylate to malonic semialdehyde, a reaction that can also occur spontaneously. RutC may facilitate the reaction and modulate the metabolic fitness, rather than catalyzing essential functions. The protein is 3-aminoacrylate deaminase RutC of Serratia proteamaculans (strain 568).